Reading from the N-terminus, the 318-residue chain is Ubiquitin-like domain-containing CTD phosphatase 1 (318 aa).

The region spanning 3–81 (LSLIIKWGGQ…IMMMGTREES (79 aa)) is the Ubiquitin-like domain. Residues 133–294 (PREGKKLLVL…VKLSQYLKEI (162 aa)) enclose the FCP1 homology domain. Aspartate 143, aspartate 145, and aspartate 253 together coordinate Mg(2+).

It depends on Mg(2+) as a cofactor.

The protein localises to the nucleus. The enzyme catalyses O-phospho-L-seryl-[protein] + H2O = L-seryl-[protein] + phosphate. The catalysed reaction is O-phospho-L-threonyl-[protein] + H2O = L-threonyl-[protein] + phosphate. Functionally, dephosphorylates 26S nuclear proteasomes, thereby decreasing their proteolytic activity. Recruited to the 19S regulatory particle of the 26S proteasome where it dephosphorylates 19S component psmc2 which impairs psmc2 ATPase activity and disrupts 26S proteasome assembly. Has also been reported to stimulate the proteolytic activity of the 26S proteasome. The protein is Ubiquitin-like domain-containing CTD phosphatase 1 (ublcp1) of Xenopus laevis (African clawed frog).